We begin with the raw amino-acid sequence, 484 residues long: MAAKKVFGSAEASNLVTELRRSFDDGVTRGYEWRVTQLKKLMIICDNHEPEIVAALRDDLGKPELESSVYEVSLLRNSIKLALKQLKNWMAPEKAKTSLTTFPASAEIVSEPLGVVLVISAWNYPFLLSIDPVIGAISAGNAVVLKPSELAPASSALLTKLLEQYLDPSAVRVVEGAVTETSALLEQKWDKIFYTGSSKIGRVIMAAAAKHLTPVVLELGGKSPVVVDSDTDLKVTVRRIIVGKWGCNNGQACVSPDYILTTKEYAPKLIDAMKLELEKFYGKNPIESKDMSRIVNSNHFDRLSKLLDEKEVSDKIVYGGEKDRENLKIAPTILLDVPLDSLIMSEEIFGPLLPILTLNNLEESFDVIRSRPKPLAAYLFTHNKKLKERFAATVSAGGIVVNDIAVHLALHTLPFGGVGESGMGAYHGKFSFDAFSHKKAVLYRSLFGDSAVRYPPYSRGKLRLLKALVDSNIFDLFKVLLGLA.

196–201 (GSSKIG) provides a ligand contact to NAD(+). The active-site Proton acceptor is the Glu218. Cys253 functions as the Nucleophile in the catalytic mechanism.

Belongs to the aldehyde dehydrogenase family. As to quaternary structure, homodimer and homomultimer. As to expression, isoform alpha is expressed in expanded leaves and flowers. Detected in seedlings. Isoform beta is mainly expressed in flowers. Detected in leaves and seedlings.

The catalysed reaction is an aldehyde + NAD(+) + H2O = a carboxylate + NADH + 2 H(+). Its activity is regulated as follows. Thiol-based regulation. Inactivation after dimerization under oxidizing conditions. Functionally, involved in oxidative stress tolerance by detoxifying reactive aldehydes derived from lipid peroxidation. Medium- to long-chain saturated aldehydes are preferred substrates, while the short-chain aldehyde propanal is a weak substrate. Is strictely NAD(+) specific. The protein is Aldehyde dehydrogenase family 3 member H1 (ALDH3H1) of Arabidopsis thaliana (Mouse-ear cress).